A 188-amino-acid polypeptide reads, in one-letter code: HGPRTase-like protein 1 (188 aa).

The protein belongs to the purine/pyrimidine phosphoribosyltransferase family. Archaeal HPRT subfamily.

Functionally, may catalyze a purine salvage reaction, the substrate is unknown. The sequence is that of HGPRTase-like protein 1 from Haloferax volcanii (strain ATCC 29605 / DSM 3757 / JCM 8879 / NBRC 14742 / NCIMB 2012 / VKM B-1768 / DS2) (Halobacterium volcanii).